The chain runs to 182 residues: ATP synthase subunit delta (182 aa).

This sequence belongs to the ATPase delta chain family. In terms of assembly, F-type ATPases have 2 components, F(1) - the catalytic core - and F(0) - the membrane proton channel. F(1) has five subunits: alpha(3), beta(3), gamma(1), delta(1), epsilon(1). CF(0) has four main subunits: a(1), b(1), b'(1) and c(10-14). The alpha and beta chains form an alternating ring which encloses part of the gamma chain. F(1) is attached to F(0) by a central stalk formed by the gamma and epsilon chains, while a peripheral stalk is formed by the delta, b and b' chains.

It localises to the cellular thylakoid membrane. Its function is as follows. F(1)F(0) ATP synthase produces ATP from ADP in the presence of a proton or sodium gradient. F-type ATPases consist of two structural domains, F(1) containing the extramembraneous catalytic core and F(0) containing the membrane proton channel, linked together by a central stalk and a peripheral stalk. During catalysis, ATP synthesis in the catalytic domain of F(1) is coupled via a rotary mechanism of the central stalk subunits to proton translocation. This protein is part of the stalk that links CF(0) to CF(1). It either transmits conformational changes from CF(0) to CF(1) or is implicated in proton conduction. The polypeptide is ATP synthase subunit delta (Microcystis aeruginosa (strain NIES-843 / IAM M-2473)).